We begin with the raw amino-acid sequence, 150 residues long: MNTNTLLIENKKAKFNYFIEEKISCGIVLKGTEVKSIKAKKLSFNNSFAIIKKEELWLENLHVSKYKEGNIFNHDELRPRKLLIKKKELQRLKKFKEKEGYTLIPISFYLKKSIIKVEVGICKGKKLYDKREILKQKSIKKDLSREIKYK.

Belongs to the SmpB family.

The protein localises to the cytoplasm. In terms of biological role, required for rescue of stalled ribosomes mediated by trans-translation. Binds to transfer-messenger RNA (tmRNA), required for stable association of tmRNA with ribosomes. tmRNA and SmpB together mimic tRNA shape, replacing the anticodon stem-loop with SmpB. tmRNA is encoded by the ssrA gene; the 2 termini fold to resemble tRNA(Ala) and it encodes a 'tag peptide', a short internal open reading frame. During trans-translation Ala-aminoacylated tmRNA acts like a tRNA, entering the A-site of stalled ribosomes, displacing the stalled mRNA. The ribosome then switches to translate the ORF on the tmRNA; the nascent peptide is terminated with the 'tag peptide' encoded by the tmRNA and targeted for degradation. The ribosome is freed to recommence translation, which seems to be the essential function of trans-translation. The protein is SsrA-binding protein of Borreliella afzelii (strain PKo) (Borrelia afzelii).